A 532-amino-acid chain; its full sequence is Calnexin homolog 2 (532 aa).

An N-terminal signal peptide occupies residues 1–25 (MRERIITFVSLLLVALLSFPSVSYC). The Lumenal portion of the chain corresponds to 26–468 (DDQTILYESF…EKAETQPNLT (443 aa)). Ca(2+) contacts are provided by serine 34 and aspartate 65. A disulfide bond links cysteine 110 and cysteine 145. An alpha-D-glucoside is bound by residues tyrosine 114, lysine 116, tyrosine 136, and aspartate 143. Residues 208–302 (NLLSAEDFEP…DEEDGEWEAP (95 aa)) form a disordered region. Residues 225-358 (IPDPEDKKPE…RDIPNPDYFE (134 aa)) are p domain (Extended arm). Residues 226–242 (PDPEDKKPEDWDERAKI) are compositionally biased toward basic and acidic residues. 5 consecutive repeat copies span residues 227 to 238 (DPEDKKPEDWDE), 244 to 255 (DPNAVKPDDWDE), 263 to 274 (DEEAEKPEGWLD), 282 to 293 (DPEASKPEDWDD), and 297 to 307 (GEWEAPKVSNT). 4 X approximate repeats stretches follow at residues 227–293 (DPED…DWDD) and 297–354 (GEWE…IPNP). Acidic residues-rich tracts occupy residues 252–283 (DWDE…VEDP) and 290–299 (DWDDEEDGEW). Residues cysteine 309 and cysteine 315 are joined by a disulfide bond. Repeat copies occupy residues 316–326 (GEWKRPMKRNP), 330–340 (GKWSSPLIDNP), and 344–354 (GIWKPRDIPNP). Glutamate 373 serves as a coordination point for an alpha-D-glucoside. Residue aspartate 384 coordinates Ca(2+). An N-linked (GlcNAc...) asparagine glycan is attached at asparagine 466. Residues 469–489 (IGVLISIVIVFLSLFFKLIFG) traverse the membrane as a helical segment. The Cytoplasmic portion of the chain corresponds to 490-532 (GAKAKVEKKKPETAAETSTSEAKTEEKAEAVAAPRKRQTRRES). Residues 493–532 (AKVEKKKPETAAETSTSEAKTEEKAEAVAAPRKRQTRRES) form a disordered region. Residues 523 to 532 (PRKRQTRRES) are compositionally biased toward basic residues.

This sequence belongs to the calreticulin family.

Its subcellular location is the endoplasmic reticulum membrane. Calcium-binding protein that interacts with newly synthesized monoglucosylated glycoproteins in the endoplasmic reticulum. It may act in assisting protein assembly and/or in the retention within the ER of unassembled protein subunits. It seems to play a major role in the quality control apparatus of the ER by the retention of incorrectly folded proteins. This Arabidopsis thaliana (Mouse-ear cress) protein is Calnexin homolog 2.